We begin with the raw amino-acid sequence, 257 residues long: Protein YIPF5 (257 aa).

Residues 1-124 (MSGFDNFNTD…KASDGSIMNE (124 aa)) lie on the Cytoplasmic side of the membrane. Residues 125-145 (TDLAGPMVFCLAFGATLLLTG) traverse the membrane as a helical segment. Residue Lys146 is a topological domain, lumenal. The chain crosses the membrane as a helical span at residues 147–167 (IQFGYVYGISAIGCLGMYCLL). The Cytoplasmic portion of the chain corresponds to 168 to 173 (NLMSMT). A helical membrane pass occupies residues 174-194 (GVSFGCVASVLGYCLLPMIIL). The Lumenal segment spans residues 195–196 (SS). The helical transmembrane segment at 197 to 217 (FGVIFSLQGIMGIILTAAIIG) threads the bilayer. The Cytoplasmic segment spans residues 218–236 (WCSLSASKIFISALAMDGQ). Residues 237–257 (QLLVAYPCALLYGVFALISVF) form a helical membrane-spanning segment.

Belongs to the YIP1 family.

It localises to the endoplasmic reticulum membrane. The protein localises to the golgi apparatus. It is found in the cis-Golgi network membrane. Plays a role in transport between endoplasmic reticulum and Golgi. The sequence is that of Protein YIPF5 (yipf5) from Danio rerio (Zebrafish).